The following is a 534-amino-acid chain: Ulvan lyase NLR42 (534 aa).

Positions 1–47 are cleaved as a signal peptide; it reads MVFFKDLFIFKSLIKGSLYSGHMKKKLLNYLPLFALMLFTVSMMAQT. An intrachain disulfide couples C59 to C89. Ca(2+) contacts are provided by G63, N68, D86, T88, A91, and D92. Residue Y164 coordinates substrate. The active-site Proton acceptor is K169. Substrate is bound by residues 218–223 and 288–291; these read SGAAGR and YRVK. Y288 (proton donor/acceptor) is an active-site residue. The ulvan-binding domain stretch occupies residues 316-449; that stretch reads PAADIYRIKN…SKWNLESTTL (134 aa). A propeptide spans 450 to 534 (removed by the type IX secretion system (T9SS)); the sequence is SVDSQQIASV…KVYQTKLIVN (85 aa).

It belongs to the polysaccharide lyase 28 family. Ca(2+) serves as cofactor.

It localises to the secreted. In terms of biological role, ulvan lyase involved in ulvan degradation. Ulvan is the main polysaccharide component of the Ulvales (green seaweed) cell wall. It is composed of disaccharide building blocks comprising 3-sulfated rhamnose (Rha3S) linked to D-glucuronic acid (GlcA), L-iduronic acid (IduA), or D-xylose (Xyl). Ulvan lyase catalyzes the endolytic cleavage of the glycosidic bond between Rha3S and the uronic acids GlcA or IduA, producing oligosaccharides that have unsaturated 4-deoxy-L-threo-hex-4-enopyranosiduronic acid (deltaUA) at the non-reducing end. This results eventually in the degradation of the ulvan polysaccharide into deltaUA-Rha3S disaccharides and deltaUA-Rha3S-Xyl-Rha3S tetrasaccharides. The chain is Ulvan lyase NLR42 from Nonlabens ulvanivorans (Persicivirga ulvanivorans).